We begin with the raw amino-acid sequence, 199 residues long: Recombination protein RecR (199 aa).

The segment at 58–73 adopts a C4-type zinc-finger fold; that stretch reads CSVCYGLADSDPCHIC. Positions 81–176 constitute a Toprim domain; sequence DVVCVVEQGT…KITRIASGVP (96 aa).

The protein belongs to the RecR family.

Functionally, may play a role in DNA repair. It seems to be involved in an RecBC-independent recombinational process of DNA repair. It may act with RecF and RecO. In Desulfatibacillum aliphaticivorans, this protein is Recombination protein RecR.